The chain runs to 283 residues: MAEITASLVKELRERTGAGMMDCKKALTEANGDIELAIENMRKSGAIKAAKKAGNVAADGVIKTKIEGNYGYILEVNCQTDFVAKDGGFQAFADKVLDAAVAGKISDVEVLKAQFEEERVALVAKIGENINIRRIAVLEGDVLGSYQHGARIGVLVAAKGADEELVKQLAMHVAASKPEFVKPEDVSAEVVEKEYQVQLDIAMQSGKPKEIAEKMVEGRMKKFTGEVSLTGQPFVMEPSKSVGQLLKEHNADVTGFIRFEVGEGIEKVETDFAAEVAAMSKQS.

The segment at 80-83 (TDFV) is involved in Mg(2+) ion dislocation from EF-Tu.

This sequence belongs to the EF-Ts family.

It localises to the cytoplasm. Functionally, associates with the EF-Tu.GDP complex and induces the exchange of GDP to GTP. It remains bound to the aminoacyl-tRNA.EF-Tu.GTP complex up to the GTP hydrolysis stage on the ribosome. This is Elongation factor Ts from Klebsiella pneumoniae (strain 342).